The primary structure comprises 273 residues: Vacuolar iron transporter (273 aa).

Residues 1 to 47 (MGKQKIIDARKAYYEGDIEKSKEIHSHYHNLDKHAEHHSLDKDHLKT) lie on the Cytoplasmic side of the membrane. A helical transmembrane segment spans residues 48–68 (IIFGSLDGIITIFAIVSGCVG). Residues 69-72 (ANIT) lie on the Vacuolar side of the membrane. A helical membrane pass occupies residues 73 to 93 (PAQVIIIGVGNLFANAISMGF). Over 94 to 181 (SEYTSSTAQI…NEDKSEAFKK (88 aa)) the chain is Cytoplasmic. Positions 113, 116, 124, 127, 161, and 165 each coordinate Fe cation. A helical transmembrane segment spans residues 182–202 (GILMFLSFCFFGMIPLFSYVL). The Vacuolar portion of the chain corresponds to 203–212 (YNLFFSAENY). Residues 213-233 (TSSFAVVFISTLITLFILGLF) form a helical membrane-spanning segment. Topologically, residues 234-246 (KSQFTTQKPIVCA) are cytoplasmic. The helical transmembrane segment at 247–267 (LSMVLNGSIAGMLPFLFGVLL) threads the bilayer. Residues 268–273 (KTNSGD) are Vacuolar-facing.

This sequence belongs to the CCC1 family. In terms of assembly, monomer.

The protein resides in the vacuole membrane. Its subcellular location is the endoplasmic reticulum membrane. The enzyme catalyses Fe(2+)(in) = Fe(2+)(out). Functionally, vacuolar iron transporter involved in the transfer of iron ions from the cytosol to the vacuole for intracellular iron storage. Involved in detoxification of excess iron. The transport mechanism is not well defined and the role of protons is not clear. The sequence is that of Vacuolar iron transporter from Plasmodium berghei (strain Anka).